Here is a 407-residue protein sequence, read N- to C-terminus: Dual-specificity RNA methyltransferase RlmN (407 aa).

E136 acts as the Proton acceptor in catalysis. A Radical SAM core domain is found at 144-378 (REDRGAVCIS…MDAGFASPIR (235 aa)). A disulfide bridge connects residues C151 and C389. C158, C162, and C165 together coordinate [4Fe-4S] cluster. S-adenosyl-L-methionine contacts are provided by residues 215–216 (GE), S247, 269–271 (SLH), and N346. The active-site S-methylcysteine intermediate is the C389.

Belongs to the radical SAM superfamily. RlmN family. [4Fe-4S] cluster is required as a cofactor.

It localises to the cytoplasm. It carries out the reaction adenosine(2503) in 23S rRNA + 2 reduced [2Fe-2S]-[ferredoxin] + 2 S-adenosyl-L-methionine = 2-methyladenosine(2503) in 23S rRNA + 5'-deoxyadenosine + L-methionine + 2 oxidized [2Fe-2S]-[ferredoxin] + S-adenosyl-L-homocysteine. It catalyses the reaction adenosine(37) in tRNA + 2 reduced [2Fe-2S]-[ferredoxin] + 2 S-adenosyl-L-methionine = 2-methyladenosine(37) in tRNA + 5'-deoxyadenosine + L-methionine + 2 oxidized [2Fe-2S]-[ferredoxin] + S-adenosyl-L-homocysteine. In terms of biological role, specifically methylates position 2 of adenine 2503 in 23S rRNA and position 2 of adenine 37 in tRNAs. m2A2503 modification seems to play a crucial role in the proofreading step occurring at the peptidyl transferase center and thus would serve to optimize ribosomal fidelity. In Gluconobacter oxydans (strain 621H) (Gluconobacter suboxydans), this protein is Dual-specificity RNA methyltransferase RlmN.